Reading from the N-terminus, the 686-residue chain is Alpha-amylase 1 (686 aa).

Glu-125 functions as the Nucleophile in the catalytic mechanism. Asp-216 serves as the catalytic Proton donor.

It belongs to the glycosyl hydrolase 57 family.

The protein resides in the cytoplasm. The enzyme catalyses Endohydrolysis of (1-&gt;4)-alpha-D-glucosidic linkages in polysaccharides containing three or more (1-&gt;4)-alpha-linked D-glucose units.. This amylase is a highly liquefying-type: oligomers appeared at the beginning of incubation, followed by a graded decrease in the amounts of maltotriose, maltose and glucose in prolonged incubation. The chain is Alpha-amylase 1 (amyA) from Dictyoglomus thermophilum (strain ATCC 35947 / DSM 3960 / H-6-12).